The sequence spans 133 residues: MRSLGHQIVADFYHCDGSTLSDVDFVTDAMLEAARRANCTIVTQTFHHFSPYGVSGAVIVAESHLAIHTWPEYGYAAVDVFTCGDIIQPEDALNYLKEAFGAGQVSTMEMKRGQVDMMGVPAHELRVKPALCA.

The Schiff-base intermediate with substrate; via pyruvic acid role is filled by Ser63. Pyruvic acid (Ser); by autocatalysis is present on Ser63. Residue His68 is the Proton acceptor; for processing activity of the active site. Residue Cys83 is the Proton donor; for catalytic activity of the active site.

This sequence belongs to the prokaryotic AdoMetDC family. Type 1 subfamily. As to quaternary structure, heterotetramer of two alpha and two beta chains arranged as a dimer of alpha/beta heterodimers. Pyruvate is required as a cofactor. In terms of processing, is synthesized initially as an inactive proenzyme. Formation of the active enzyme involves a self-maturation process in which the active site pyruvoyl group is generated from an internal serine residue via an autocatalytic post-translational modification. Two non-identical subunits are generated from the proenzyme in this reaction, and the pyruvate is formed at the N-terminus of the alpha chain, which is derived from the carboxyl end of the proenzyme. The post-translation cleavage follows an unusual pathway, termed non-hydrolytic serinolysis, in which the side chain hydroxyl group of the serine supplies its oxygen atom to form the C-terminus of the beta chain, while the remainder of the serine residue undergoes an oxidative deamination to produce ammonia and the pyruvoyl group blocking the N-terminus of the alpha chain.

It catalyses the reaction S-adenosyl-L-methionine + H(+) = S-adenosyl 3-(methylsulfanyl)propylamine + CO2. It functions in the pathway amine and polyamine biosynthesis; S-adenosylmethioninamine biosynthesis; S-adenosylmethioninamine from S-adenosyl-L-methionine: step 1/1. In terms of biological role, catalyzes the decarboxylation of S-adenosylmethionine to S-adenosylmethioninamine (dcAdoMet), the propylamine donor required for the synthesis of the polyamines spermine and spermidine from the diamine putrescine. This is S-adenosylmethionine decarboxylase proenzyme from Acidithiobacillus ferrooxidans (strain ATCC 23270 / DSM 14882 / CIP 104768 / NCIMB 8455) (Ferrobacillus ferrooxidans (strain ATCC 23270)).